A 78-amino-acid polypeptide reads, in one-letter code: Acyl carrier protein (78 aa).

Residues 2-77 (DNIVERVKKI…QAVDYILAGK (76 aa)) form the Carrier domain. At Ser37 the chain carries O-(pantetheine 4'-phosphoryl)serine.

Belongs to the acyl carrier protein (ACP) family. Post-translationally, 4'-phosphopantetheine is transferred from CoA to a specific serine of apo-ACP by AcpS. This modification is essential for activity because fatty acids are bound in thioester linkage to the sulfhydryl of the prosthetic group.

It localises to the cytoplasm. It functions in the pathway lipid metabolism; fatty acid biosynthesis. Its function is as follows. Carrier of the growing fatty acid chain in fatty acid biosynthesis. This Dechloromonas aromatica (strain RCB) protein is Acyl carrier protein.